Consider the following 318-residue polypeptide: L-lactate dehydrogenase (318 aa).

Residues valine 18, aspartate 39, lysine 44, tyrosine 69, and 83–84 each bind NAD(+); that span reads GA. Substrate-binding residues include glutamine 86 and arginine 92. Residues serine 105, 122–124, and serine 147 each bind NAD(+); that span reads VSN. 124 to 127 is a binding site for substrate; sequence NPVD. 152-155 provides a ligand contact to substrate; sequence DTSR. Histidine 179 (proton acceptor) is an active-site residue. Residue tyrosine 225 is modified to Phosphotyrosine. Substrate is bound at residue threonine 234.

This sequence belongs to the LDH/MDH superfamily. LDH family. As to quaternary structure, homotetramer.

The protein resides in the cytoplasm. The catalysed reaction is (S)-lactate + NAD(+) = pyruvate + NADH + H(+). It participates in fermentation; pyruvate fermentation to lactate; (S)-lactate from pyruvate: step 1/1. Functionally, catalyzes the conversion of lactate to pyruvate. The protein is L-lactate dehydrogenase of Clostridium botulinum (strain ATCC 19397 / Type A).